Here is a 322-residue protein sequence, read N- to C-terminus: Germ cell-specific gene 1-like protein (322 aa).

Residues 1 to 8 (MKTSRRGR) lie on the Cytoplasmic side of the membrane. The chain crosses the membrane as a helical span at residues 9–29 (ALLAVALNLLALLFATTAFLT). Residues 30-122 (TYWCQGTQRV…FIDLAPASEK (93 aa)) are Extracellular-facing. The chain crosses the membrane as a helical span at residues 123–143 (GVLWLSVVSEVLYILLLVVGF). Topologically, residues 144–163 (SLMCLELVHSSSVIDGLKLN) are cytoplasmic. Residues 164-184 (AFAAVFTVLSGLLGMVAHMMY) form a helical membrane-spanning segment. The Extracellular portion of the chain corresponds to 185-207 (TQVFQVTVSLGPEDWRPHSWDYG). The chain crosses the membrane as a helical span at residues 208–228 (WSFCLAWGSFTCCMAASVTTL). Topologically, residues 229 to 322 (NSYTKTVIEF…RQCWVLGHWV (94 aa)) are cytoplasmic. Serine 274 carries the post-translational modification Phosphoserine.

This sequence belongs to the GSG1 family. In terms of assembly, component of the inner core of AMPAR complexes. AMPAR complexes consist of an inner core made of 4 pore-forming GluA/GRIA proteins (GRIA1, GRIA2, GRIA3 and GRIA4) and 4 major auxiliary subunits arranged in a twofold symmetry. One of the two pairs of distinct binding sites is occupied either by CNIH2, CNIH3 or CACNG2, CACNG3. The other harbors CACNG2, CACNG3, CACNG4, CACNG8 or GSG1L. This inner core of AMPAR complexes is complemented by outer core constituents binding directly to the GluA/GRIA proteins at sites distinct from the interaction sites of the inner core constituents. Outer core constituents include at least PRRT1, PRRT2, CKAMP44/SHISA9, FRRS1L and NRN1. The proteins of the inner and outer core serve as a platform for other, more peripherally associated AMPAR constituents. Alone or in combination, these auxiliary subunits control the gating and pharmacology of the AMPAR complexes and profoundly impact their biogenesis and protein processing. Expressed in the brain, including hippocampus (at protein level).

The protein resides in the cell membrane. It is found in the synapse. Functionally, as a component of the inner core of AMPAR complexes, modifies AMPA receptor (AMPAR) gating. This Mus musculus (Mouse) protein is Germ cell-specific gene 1-like protein (Gsg1l).